The following is a 463-amino-acid chain: NADH-quinone oxidoreductase subunit N (463 aa).

Transmembrane regions (helical) follow at residues 5–25 (LLYG…LMLL), 34–54 (AGSA…VMQL), 72–92 (FSEI…VYSL), 99–119 (KYWI…DSAG), 120–140 (FISL…LMVL), 154–174 (YLLL…LVYG), 196–216 (LAAS…FPFH), 230–250 (VTAF…VRIL), 259–279 (AVTV…ITAI), 286–303 (KMLA…MFAL), 314–334 (LLYY…CFSI), 356–376 (AILL…PGFL), 393–413 (VAVL…GVVL), and 432–452 (LCWT…FMLL).

The protein belongs to the complex I subunit 2 family. In terms of assembly, NDH-1 is composed of 14 different subunits. Subunits NuoA, H, J, K, L, M, N constitute the membrane sector of the complex.

Its subcellular location is the cell inner membrane. The enzyme catalyses a quinone + NADH + 5 H(+)(in) = a quinol + NAD(+) + 4 H(+)(out). In terms of biological role, NDH-1 shuttles electrons from NADH, via FMN and iron-sulfur (Fe-S) centers, to quinones in the respiratory chain. The immediate electron acceptor for the enzyme in this species is believed to be ubiquinone. Couples the redox reaction to proton translocation (for every two electrons transferred, four hydrogen ions are translocated across the cytoplasmic membrane), and thus conserves the redox energy in a proton gradient. The sequence is that of NADH-quinone oxidoreductase subunit N from Pelobacter propionicus (strain DSM 2379 / NBRC 103807 / OttBd1).